The sequence spans 310 residues: Nucleotide-binding protein BAD_0837 (310 aa).

An ATP-binding site is contributed by 31 to 38; the sequence is GMSGAGRS. 82-85 contributes to the GTP binding site; that stretch reads DVRS.

It belongs to the RapZ-like family.

Its function is as follows. Displays ATPase and GTPase activities. This chain is Nucleotide-binding protein BAD_0837, found in Bifidobacterium adolescentis (strain ATCC 15703 / DSM 20083 / NCTC 11814 / E194a).